The sequence spans 395 residues: S-adenosylmethionine synthase (395 aa).

ATP is bound at residue His16. A Mg(2+)-binding site is contributed by Asp18. Glu44 is a K(+) binding site. Positions 57 and 100 each coordinate L-methionine. The flexible loop stretch occupies residues 100–110 (QSPDIAQGVDD). Residues 174 to 176 (DAK), 241 to 242 (RF), Asp250, 256 to 257 (RK), Ala273, and Lys277 contribute to the ATP site. Residue Asp250 coordinates L-methionine. Lys281 contributes to the L-methionine binding site.

The protein belongs to the AdoMet synthase family. In terms of assembly, homotetramer; dimer of dimers. Mg(2+) is required as a cofactor. The cofactor is K(+).

Its subcellular location is the cytoplasm. The catalysed reaction is L-methionine + ATP + H2O = S-adenosyl-L-methionine + phosphate + diphosphate. The protein operates within amino-acid biosynthesis; S-adenosyl-L-methionine biosynthesis; S-adenosyl-L-methionine from L-methionine: step 1/1. Its function is as follows. Catalyzes the formation of S-adenosylmethionine (AdoMet) from methionine and ATP. The overall synthetic reaction is composed of two sequential steps, AdoMet formation and the subsequent tripolyphosphate hydrolysis which occurs prior to release of AdoMet from the enzyme. The sequence is that of S-adenosylmethionine synthase from Limosilactobacillus reuteri (strain DSM 20016) (Lactobacillus reuteri).